Consider the following 299-residue polypeptide: Probable alpha-L-glutamate ligase (299 aa).

The ATP-grasp domain occupies 112-294 (LQLLTEQGIA…IALQMIVHIE (183 aa)). ATP-binding positions include Lys148, 185-186 (DF), Asp194, and 218-220 (RAN). Positions 255, 267, and 269 each coordinate Mg(2+). Mn(2+) is bound by residues Asp255, Glu267, and Asn269.

It belongs to the RimK family. The cofactor is Mg(2+). Mn(2+) serves as cofactor.

This chain is Probable alpha-L-glutamate ligase, found in Histophilus somni (strain 2336) (Haemophilus somnus).